We begin with the raw amino-acid sequence, 629 residues long: Aspartate--tRNA(Asp/Asn) ligase (629 aa).

Residues 1–24 (MERSSRADLISEDSHPARTHTCGD) form a disordered region. A compositionally biased stretch (basic and acidic residues) spans 12–24 (EDSHPARTHTCGD). L-aspartate is bound at residue E194. The tract at residues 218–221 (QTYK) is aspartate. R240 lines the L-aspartate pocket. ATP contacts are provided by residues 240-242 (RDE) and Q249. An L-aspartate-binding site is contributed by H474. E508 contacts ATP. Residue R515 coordinates L-aspartate. An ATP-binding site is contributed by 560–563 (GLDR).

The protein belongs to the class-II aminoacyl-tRNA synthetase family. Type 1 subfamily. As to quaternary structure, homodimer.

The protein localises to the cytoplasm. It carries out the reaction tRNA(Asx) + L-aspartate + ATP = L-aspartyl-tRNA(Asx) + AMP + diphosphate. Aspartyl-tRNA synthetase with relaxed tRNA specificity since it is able to aspartylate not only its cognate tRNA(Asp) but also tRNA(Asn). Reaction proceeds in two steps: L-aspartate is first activated by ATP to form Asp-AMP and then transferred to the acceptor end of tRNA(Asp/Asn). The chain is Aspartate--tRNA(Asp/Asn) ligase from Salinibacter ruber (strain DSM 13855 / M31).